A 20-amino-acid polypeptide reads, in one-letter code: Venom peptide Ocy8 (20 aa).

As to expression, expressed by the venom gland.

It is found in the secreted. This chain is Venom peptide Ocy8, found in Opisthacanthus cayaporum (South American scorpion).